A 208-amino-acid polypeptide reads, in one-letter code: Ribosome maturation factor RimP (208 aa).

The tract at residues 189 to 208 is disordered; that stretch reads EAPETGATTMARDGSEEETK.

Belongs to the RimP family.

It is found in the cytoplasm. Its function is as follows. Required for maturation of 30S ribosomal subunits. The sequence is that of Ribosome maturation factor RimP from Ruegeria pomeroyi (strain ATCC 700808 / DSM 15171 / DSS-3) (Silicibacter pomeroyi).